Here is a 1007-residue protein sequence, read N- to C-terminus: MAEAAALFSLSAAAVVEDVLRQHGCRLSDRDLASRRAEEAAARRNEAAGWLRRTVGAVAARDLPEEPSEEEFRLGLRNGQILCGALNRVHPGAVPKACAHVVFVNLIRSRCAVCHCSVMVVVNTAADSVLQPDGAALSAFQYFENVRNFLVAAQEIGLPCFEASDLEQGGKSARVVNCVLALKSYGDWKQCGGTGPWKYGGNLKPSASGKSFVRKNSEPFRRCQSMNEGEVPYEEAGFSGDYHLDSGDMSTSRPLKMLVSAVLSDKRPDEVPQVKAALKNGTDGTKSFSKSKMDTIEVYSKHRQTKKEAYGEVTLKQYSMLQLQSKHVEELKADIRATKAGMEFMQMKYSEDINILGRHLFSLAHAASGYHIVLEENRKLYNQVQDLKGSIRVYCRVRPFLPGQVSSCAVGSIDEGNITIITPSKSGKEGRKTFSFNKVFGPSATQDEVFLDTQPLIRSVLDGYNVCIFAYGQTGSGKTYTMSGPKNMTEQTQGVNYRALSDLFKLAEQRKGAFIYDIAVQMIEIYNEQVRDLLVNDGLNKRLEIRNNSQNGLNVPDASLVCVASTMDVMELMNVGQKNRAVGATALNDRSSRSHSCLTVHVQGRDLTSGTILRGCMHLVDLAGSERVDKSEVTGERLKEAQHINKSLSALGDVIASLAQKSAHVPYRNSKLTQLLQDSLGGQAKTLMFVHISPESDALGESISTLKFAERVSTVELGAARLNKESGEVKELKEQIARLKSSLAMKDSGSEQNINRDPEAFNMKMPSPGFSNRRQGSCELVSSQTNFRQPMEDVGNIEVRANPTLRQKKPSFDLQDLLASNDSPSWPDSISRANFQMGEERVTIGGEWIDKVVVNNNNSVGDWEGDSAALPDFFYQRYHSGTRDKQYLRNNSRKKDGNEFEQQRPRFYSTNTDDSDDIDIATSDSSESDALWQFNVQSINSSISENGSKIKKPQTKLRESSDTRTPLHSQIPSASRKTSNGNRSGRQPLSGSDSRRLSSNGRHAGTK.

In terms of domain architecture, Calponin-homology (CH) spans 41 to 187 (AARRNEAAGW…CVLALKSYGD (147 aa)). Positions 390–715 (SIRVYCRVRP…LKFAERVSTV (326 aa)) constitute a Kinesin motor domain. 472–479 (GQTGSGKT) is a binding site for ATP. Residues 718–748 (GAARLNKESGEVKELKEQIARLKSSLAMKDS) are a coiled coil. The segment covering 885–904 (KQYLRNNSRKKDGNEFEQQR) has biased composition (basic and acidic residues). Disordered regions lie at residues 885-924 (KQYLRNNSRKKDGNEFEQQRPRFYSTNTDDSDDIDIATSD) and 944-1007 (SENG…AGTK). A compositionally biased stretch (polar residues) spans 963–1001 (TRTPLHSQIPSASRKTSNGNRSGRQPLSGSDSRRLSSNG).

The protein belongs to the TRAFAC class myosin-kinesin ATPase superfamily. Kinesin family. KIN-14 subfamily.

This is Kinesin-like protein KIN-14F from Oryza sativa subsp. japonica (Rice).